The chain runs to 276 residues: 3-methyl-2-oxobutanoate hydroxymethyltransferase (276 aa).

Residues D46 and D85 each coordinate Mg(2+). 3-methyl-2-oxobutanoate contacts are provided by residues 46 to 47, D85, and K115; that span reads DS. Position 117 (E117) interacts with Mg(2+). The active-site Proton acceptor is the E184.

The protein belongs to the PanB family. In terms of assembly, homodecamer; pentamer of dimers. Requires Mg(2+) as cofactor.

The protein localises to the cytoplasm. The catalysed reaction is 3-methyl-2-oxobutanoate + (6R)-5,10-methylene-5,6,7,8-tetrahydrofolate + H2O = 2-dehydropantoate + (6S)-5,6,7,8-tetrahydrofolate. It functions in the pathway cofactor biosynthesis; (R)-pantothenate biosynthesis; (R)-pantoate from 3-methyl-2-oxobutanoate: step 1/2. In terms of biological role, catalyzes the reversible reaction in which hydroxymethyl group from 5,10-methylenetetrahydrofolate is transferred onto alpha-ketoisovalerate to form ketopantoate. The sequence is that of 3-methyl-2-oxobutanoate hydroxymethyltransferase from Heliobacterium modesticaldum (strain ATCC 51547 / Ice1).